A 111-amino-acid chain; its full sequence is Cytochrome c2 (111 aa).

The heme c site is built by C14, C17, H18, and M83.

It belongs to the cytochrome c family. Post-translationally, binds 1 heme c group covalently per subunit.

Functionally, cytochrome c2 is found mainly in purple, non-sulfur, photosynthetic bacteria where it functions as the electron donor to the oxidized bacteriochlorophyll in the photophosphorylation pathway. However, it may also have a role in the respiratory chain and is found in some non-photosynthetic bacteria. This is Cytochrome c2 from Agrobacterium tumefaciens (strain II Chrys).